The primary structure comprises 44 residues: Phosphatase RapE inhibitor (44 aa).

Propeptides lie at residues 1–30 (MKSK…MKEA) and 36–44 (LAPTHEFLV).

The protein belongs to the Phr family. Post-translationally, contains a predicted signal peptide cleavage site in the N-terminal region, however the propeptide is probably only subject to processing events at the ends of the mature peptide.

The protein resides in the secreted. It is found in the cytoplasm. Signaling molecule involved in the regulation of sporulation. Secreted during production, but the mature peptide acts intracellularly, indicating that it needs to be imported into the cell to function. Inhibitor of the RapE phosphatase activity. Does not inhibit the phosphatase activity of RapA and RapB. Probably plays a dispensable role in the overall context of sporulation initiation. The sequence is that of Phosphatase RapE inhibitor (phrE) from Bacillus subtilis (strain 168).